Reading from the N-terminus, the 327-residue chain is GMP reductase (327 aa).

The Thioimidate intermediate role is filled by Cys-176. 205-228 (IIADGGIRTHGDIVKSIRFGATMV) provides a ligand contact to NADP(+).

It belongs to the IMPDH/GMPR family. GuaC type 2 subfamily.

The enzyme catalyses IMP + NH4(+) + NADP(+) = GMP + NADPH + 2 H(+). Functionally, catalyzes the irreversible NADPH-dependent deamination of GMP to IMP. It functions in the conversion of nucleobase, nucleoside and nucleotide derivatives of G to A nucleotides, and in maintaining the intracellular balance of A and G nucleotides. The chain is GMP reductase from Helicobacter pylori (strain ATCC 700392 / 26695) (Campylobacter pylori).